The chain runs to 571 residues: Cytosolic Fe-S cluster assembly factor NAR1 (571 aa).

Cysteine 20, cysteine 62, cysteine 65, cysteine 68, cysteine 204, and cysteine 259 together coordinate [4Fe-4S] cluster. A disordered region spans residues 415–437; that stretch reads AKPSRMPGGKPIGSARRPNGKAS. [4Fe-4S] cluster-binding residues include cysteine 449 and cysteine 453.

This sequence belongs to the NARF family.

Its function is as follows. Component of the cytosolic Fe/S protein assembly machinery. Required for maturation of extramitochondrial Fe/S proteins. May play a role in the transfer of pre-assembled Fe/S clusters to target apoproteins. The sequence is that of Cytosolic Fe-S cluster assembly factor NAR1 (NAR1) from Sclerotinia sclerotiorum (strain ATCC 18683 / 1980 / Ss-1) (White mold).